Consider the following 708-residue polypeptide: Alpha-galactosidase (708 aa).

Catalysis depends on Asp-441, which acts as the Nucleophile. Residue Asp-505 is the Proton donor of the active site.

The protein belongs to the glycosyl hydrolase 36 family. Homotetramer.

It carries out the reaction Hydrolysis of terminal, non-reducing alpha-D-galactose residues in alpha-D-galactosides, including galactose oligosaccharides, galactomannans and galactolipids.. In Escherichia coli, this protein is Alpha-galactosidase (rafA).